A 347-amino-acid polypeptide reads, in one-letter code: GMP reductase (347 aa).

108 to 131 lines the NADP(+) pocket; sequence ADFEKTVQILALDPALNFVCIDVA. 2 residues coordinate K(+): Gly-181 and Gly-183. Cys-186 acts as the Thioimidate intermediate in catalysis. Position 216–239 (216–239) interacts with NADP(+); sequence IVSDGGCTMPGDVAKAFGGGADFV.

The protein belongs to the IMPDH/GMPR family. GuaC type 1 subfamily. In terms of assembly, homotetramer.

The enzyme catalyses IMP + NH4(+) + NADP(+) = GMP + NADPH + 2 H(+). In terms of biological role, catalyzes the irreversible NADPH-dependent deamination of GMP to IMP. It functions in the conversion of nucleobase, nucleoside and nucleotide derivatives of G to A nucleotides, and in maintaining the intracellular balance of A and G nucleotides. This chain is GMP reductase, found in Salmonella paratyphi B (strain ATCC BAA-1250 / SPB7).